Reading from the N-terminus, the 647-residue chain is Threonine--tRNA ligase (647 aa).

Residues M1–T61 enclose the TGS domain. Positions D242–P540 are catalytic. Positions 336, 387, and 517 each coordinate Zn(2+).

This sequence belongs to the class-II aminoacyl-tRNA synthetase family. Homodimer. It depends on Zn(2+) as a cofactor.

The protein resides in the cytoplasm. It catalyses the reaction tRNA(Thr) + L-threonine + ATP = L-threonyl-tRNA(Thr) + AMP + diphosphate + H(+). Its function is as follows. Catalyzes the attachment of threonine to tRNA(Thr) in a two-step reaction: L-threonine is first activated by ATP to form Thr-AMP and then transferred to the acceptor end of tRNA(Thr). Also edits incorrectly charged L-seryl-tRNA(Thr). This chain is Threonine--tRNA ligase, found in Streptococcus pneumoniae serotype 4 (strain ATCC BAA-334 / TIGR4).